The chain runs to 822 residues: AP-1 complex subunit gamma-1 (822 aa).

Residues 593–604 show a composition bias toward polar residues; it reads NGPSEIVQTNGE. Residues 593–627 form a disordered region; it reads NGPSEIVQTNGETEPAPLETKPPPSGPQPTSQAND. Residues 702 to 817 form the GAE domain; it reads PGIPSITAYS…QDLAEVNNFP (116 aa).

Belongs to the adaptor complexes large subunit family. In terms of assembly, adaptor protein complex 1 (AP-1) is a heterotetramer composed of two large adaptins (gamma-type subunit AP1G1 and beta-type subunit AP1B1), a medium adaptin (mu-type subunit AP1M1 or AP1M2) and a small adaptin (sigma-type subunit AP1S1 or AP1S2 or AP1S3). Interacts (via GAE domain) with RABEP1. Interacts with EPS15. Interacts with SYNRG/gamma-synergin. Interacts (via GAE domain) with AP1AR (via coiled-coil domain). Interacts with CLN3 (via dileucine motif); this interaction facilitates lysosomal targeting. Interacts (via GAE domain) with AFTPH/aftiphilin; the interaction is required to recruit AFTPH/aftiphilin to the perinuclear region of the cell. Widely expressed.

The protein resides in the golgi apparatus. It localises to the cytoplasmic vesicle. The protein localises to the clathrin-coated vesicle membrane. Its subcellular location is the cytoplasm. It is found in the perinuclear region. The protein resides in the clathrin-coated vesicle. It localises to the membrane. The protein localises to the clathrin-coated pit. Its function is as follows. Subunit of clathrin-associated adaptor protein complex 1 that plays a role in protein sorting in the late-Golgi/trans-Golgi network (TGN) and/or endosomes. The AP complexes mediate both the recruitment of clathrin to membranes and the recognition of sorting signals within the cytosolic tails of transmembrane cargo molecules. In association with AFTPH/aftiphilin in the aftiphilin/p200/gamma-synergin complex, involved in the trafficking of transferrin from early to recycling endosomes, and the membrane trafficking of furin and the lysosomal enzyme cathepsin D between the trans-Golgi network (TGN) and endosomes. The polypeptide is AP-1 complex subunit gamma-1 (Ap1g1) (Mus musculus (Mouse)).